A 194-amino-acid polypeptide reads, in one-letter code: HTH-type transcriptional regulator BetI (194 aa).

An HTH tetR-type domain is found at 8–68 (EIRRAQLIDA…ATMRHVLRDL (61 aa)). Positions 31–50 (TLASVAQRANISTGIVSHYF) form a DNA-binding region, H-T-H motif.

Its pathway is amine and polyamine biosynthesis; betaine biosynthesis via choline pathway [regulation]. Functionally, repressor involved in the biosynthesis of the osmoprotectant glycine betaine. It represses transcription of the choline transporter BetT and the genes of BetAB involved in the synthesis of glycine betaine. This chain is HTH-type transcriptional regulator BetI, found in Burkholderia cenocepacia (strain HI2424).